A 464-amino-acid polypeptide reads, in one-letter code: NADH dehydrogenase [ubiquinone] flavoprotein 1, mitochondrial (464 aa).

The transit peptide at Met1 to Phe20 directs the protein to the mitochondrion. At Lys81 the chain carries N6-acetyllysine; alternate. Lys81 is modified (N6-succinyllysine; alternate). An NADH-binding site is contributed by Gly87–Gly96. Lys104 is modified (N6-acetyllysine). An FMN-binding site is contributed by Arg199–Thr247. The residue at position 257 (Arg257) is an Omega-N-methylarginine. Lys375 bears the N6-acetyllysine mark. [4Fe-4S] cluster is bound by residues Cys379, Cys382, Cys385, and Cys425.

This sequence belongs to the complex I 51 kDa subunit family. Core subunit of respiratory chain NADH dehydrogenase (Complex I) which is composed of 45 different subunits. This is a component of the flavoprotein-sulfur (FP) fragment of the enzyme. Interacts with RAB5IF. FMN is required as a cofactor. The cofactor is [4Fe-4S] cluster.

It is found in the mitochondrion inner membrane. The catalysed reaction is a ubiquinone + NADH + 5 H(+)(in) = a ubiquinol + NAD(+) + 4 H(+)(out). Core subunit of the mitochondrial membrane respiratory chain NADH dehydrogenase (Complex I) which catalyzes electron transfer from NADH through the respiratory chain, using ubiquinone as an electron acceptor. Part of the peripheral arm of the enzyme, where the electrons from NADH are accepted by flavin mononucleotide (FMN) and then passed along a chain of iron-sulfur clusters by electron tunnelling to the final acceptor ubiquinone. Contains FMN, which is the initial electron acceptor as well as one iron-sulfur cluster. The sequence is that of NADH dehydrogenase [ubiquinone] flavoprotein 1, mitochondrial from Mus musculus (Mouse).